The following is a 292-amino-acid chain: Claudin-23 (292 aa).

The Cytoplasmic portion of the chain corresponds to 1–3 (MRT). Residues 4-24 (PVVMTLGMVLAPCGLLLNLTG) form a helical membrane-spanning segment. Residues 25–81 (TLAPGWRLVKGFLNQPVDVELYQGLWDMCREQSSRERECGQTDQWGYFEAQPVLVAR) lie on the Extracellular side of the membrane. The chain crosses the membrane as a helical span at residues 82–102 (ALMVTSLAATVLGLLLASLGV). The Cytoplasmic portion of the chain corresponds to 103–110 (RCWQDEPN). Residues 111–131 (FVLAGLSGVVLFVAGLLGLIP) form a helical membrane-spanning segment. The Extracellular segment spans residues 132 to 160 (VSWYNHFLGDRDVLPAPASPVTVQVSYSL). A helical membrane pass occupies residues 161 to 181 (VLGYLGSCLLLLGGFSLALSF). Residues 182–292 (APWCDERCRR…DSSLPCDSDL (111 aa)) lie on the Cytoplasmic side of the membrane. A disordered region spans residues 222–292 (KYYSDGQHRP…DSSLPCDSDL (71 aa)). Polar residues predominate over residues 273–282 (DAPSCSTHPC).

It belongs to the claudin family. As to expression, expressed in germinal center B-cells, placenta, stomach as well as in colon tumor.

It is found in the cell junction. It localises to the tight junction. Its subcellular location is the cell membrane. Plays a major role in tight junction-specific obliteration of the intercellular space, through calcium-independent cell-adhesion activity. The sequence is that of Claudin-23 (CLDN23) from Homo sapiens (Human).